Consider the following 207-residue polypeptide: Small ribosomal subunit protein uS4 (207 aa).

The segment at 31–55 (KCKLDSKPGQHGRTSGARTSDYGTQ) is disordered. A compositionally biased stretch (polar residues) spans 42–53 (GRTSGARTSDYG). Positions 97–160 (SRLDNVVYRM…KKQARILEAL (64 aa)) constitute an S4 RNA-binding domain.

It belongs to the universal ribosomal protein uS4 family. As to quaternary structure, part of the 30S ribosomal subunit. Contacts protein S5. The interaction surface between S4 and S5 is involved in control of translational fidelity.

Functionally, one of the primary rRNA binding proteins, it binds directly to 16S rRNA where it nucleates assembly of the body of the 30S subunit. In terms of biological role, with S5 and S12 plays an important role in translational accuracy. This Paraburkholderia phymatum (strain DSM 17167 / CIP 108236 / LMG 21445 / STM815) (Burkholderia phymatum) protein is Small ribosomal subunit protein uS4.